The following is a 348-amino-acid chain: Tocopherol O-methyltransferase, chloroplastic (348 aa).

The transit peptide at 1–51 (MKATLAAPSSLTSLPYRTNSSFGSKSSLLFRSPSSSSSVSMTTTRGNVAVA) directs the protein to the chloroplast. Ala52 is modified (N-acetylalanine). The tract at residues 130 to 139 (VVDVGCGIGG) is SAM motif I. Positions 193 to 201 (GKFDLVWSM) are SAM motif II. The segment at 220-229 (VAAPGGRIII) is SAM motif III.

The protein belongs to the class I-like SAM-binding methyltransferase superfamily. gTMT family.

It localises to the plastid. Its subcellular location is the chloroplast. It carries out the reaction gamma-tocopherol + S-adenosyl-L-methionine = (+)-alpha-tocopherol + S-adenosyl-L-homocysteine + H(+). The enzyme catalyses delta-tocotrienol + S-adenosyl-L-methionine = beta-tocotrienol + S-adenosyl-L-homocysteine + H(+). The catalysed reaction is gamma-tocotrienol + S-adenosyl-L-methionine = alpha-tocotrienol + S-adenosyl-L-homocysteine + H(+). It catalyses the reaction delta-tocopherol + S-adenosyl-L-methionine = beta-tocopherol + S-adenosyl-L-homocysteine + H(+). The protein operates within cofactor biosynthesis; tocopherol biosynthesis. Involved in the synthesis of tocopherol (vitamin E). Methylates gamma- and delta-tocopherol to form beta- and alpha-tocopherol, respectively. The polypeptide is Tocopherol O-methyltransferase, chloroplastic (VTE4) (Arabidopsis thaliana (Mouse-ear cress)).